Reading from the N-terminus, the 202-residue chain is MTEERTADNKAAKAASFKRHGSRYKARRRAVDILFEAEFRDIDPVEIVEERISLAKDSANQVKPVPEYTQQIVPGVATNLDALDEAIALHLSSDWQLDRLPAVDRAVLRVAAWELKFNDDVPPQVAVVEGVELASEYSHDKAPSYIHAVLDGINKDLQLQADLKIADASAAKRAEQAEQPGQAESDELDGLLDGVVQESDEA.

The segment covering 1 to 11 has biased composition (basic and acidic residues); that stretch reads MTEERTADNKA. 2 disordered regions span residues 1-21 and 169-202; these read MTEE…KRHG and SAAK…SDEA.

This sequence belongs to the NusB family.

Functionally, involved in transcription antitermination. Required for transcription of ribosomal RNA (rRNA) genes. Binds specifically to the boxA antiterminator sequence of the ribosomal RNA (rrn) operons. This chain is Transcription antitermination protein NusB, found in Corynebacterium jeikeium (strain K411).